The sequence spans 320 residues: MLYKRNPQLNKNGELIHLLSIEGLPKDIVTHILDTATNFVSVQEREVKKVPLLRGKSVFNLFFENSTRTRTTFEIAAKRLSADVFNLDIARSSTAKGETLLDTIDNLSAMAADIFVVRHSESGAPYLIAQHVAPHVHVVNAGDGRHSHPTQGLLDMYTIRHYKKDFSNLTVAIVGDVLHSRVARSDIHALTTLGAAEVRVVGPRTLVPSDMAQMGVRVFHNLEEGIKGCDVVITLRLQNERMSGALLPSSQEYFKSFGLTPEKLRLAKPDAIVMHPGPINRGVEIDSAVVDGPQAVILPQVTFGIAVRMAVMSIVAGNEA.

R68 and T69 together coordinate carbamoyl phosphate. K96 serves as a coordination point for L-aspartate. Residues R118, H148, and Q151 each contribute to the carbamoyl phosphate site. L-aspartate is bound by residues R181 and R236. G277 and P278 together coordinate carbamoyl phosphate.

The protein belongs to the aspartate/ornithine carbamoyltransferase superfamily. ATCase family. Heterododecamer (2C3:3R2) of six catalytic PyrB chains organized as two trimers (C3), and six regulatory PyrI chains organized as three dimers (R2).

The catalysed reaction is carbamoyl phosphate + L-aspartate = N-carbamoyl-L-aspartate + phosphate + H(+). It participates in pyrimidine metabolism; UMP biosynthesis via de novo pathway; (S)-dihydroorotate from bicarbonate: step 2/3. Catalyzes the condensation of carbamoyl phosphate and aspartate to form carbamoyl aspartate and inorganic phosphate, the committed step in the de novo pyrimidine nucleotide biosynthesis pathway. This Acidovorax ebreus (strain TPSY) (Diaphorobacter sp. (strain TPSY)) protein is Aspartate carbamoyltransferase catalytic subunit.